The following is a 457-amino-acid chain: Cell division protein FtsZ (457 aa).

Residues 26–30 (GGGGN), 115–117 (GTG), glutamate 146, lysine 150, and aspartate 193 contribute to the GTP site. Positions 429 to 447 (KKDVVRSEESERPAFESER) are enriched in basic and acidic residues. The tract at residues 429-457 (KKDVVRSEESERPAFESERSSSPTTISFN) is disordered. Residues 448 to 457 (SSSPTTISFN) are compositionally biased toward polar residues.

Belongs to the FtsZ family. As to quaternary structure, homodimer. Polymerizes to form a dynamic ring structure in a strictly GTP-dependent manner. Interacts directly with several other division proteins.

The protein localises to the cytoplasm. Its function is as follows. Essential cell division protein that forms a contractile ring structure (Z ring) at the future cell division site. The regulation of the ring assembly controls the timing and the location of cell division. One of the functions of the FtsZ ring is to recruit other cell division proteins to the septum to produce a new cell wall between the dividing cells. Binds GTP and shows GTPase activity. The protein is Cell division protein FtsZ of Porphyromonas gingivalis (strain ATCC BAA-308 / W83).